Reading from the N-terminus, the 246-residue chain is uncharacterized protein (246 aa).

Position 194 is a phosphoserine (serine 194).

This is an uncharacterized protein from Schizosaccharomyces pombe (strain 972 / ATCC 24843) (Fission yeast).